A 307-amino-acid chain; its full sequence is Pantothenate kinase (307 aa).

87-94 (GSVAVGKS) provides a ligand contact to ATP.

It belongs to the prokaryotic pantothenate kinase family.

It localises to the cytoplasm. It carries out the reaction (R)-pantothenate + ATP = (R)-4'-phosphopantothenate + ADP + H(+). It participates in cofactor biosynthesis; coenzyme A biosynthesis; CoA from (R)-pantothenate: step 1/5. This Vibrio vulnificus (strain YJ016) protein is Pantothenate kinase.